The chain runs to 133 residues: Ribonuclease P protein component (133 aa).

This sequence belongs to the RnpA family. Consists of a catalytic RNA component (M1 or rnpB) and a protein subunit.

The catalysed reaction is Endonucleolytic cleavage of RNA, removing 5'-extranucleotides from tRNA precursor.. Its function is as follows. RNaseP catalyzes the removal of the 5'-leader sequence from pre-tRNA to produce the mature 5'-terminus. It can also cleave other RNA substrates such as 4.5S RNA. The protein component plays an auxiliary but essential role in vivo by binding to the 5'-leader sequence and broadening the substrate specificity of the ribozyme. This is Ribonuclease P protein component from Corynebacterium glutamicum (strain R).